The chain runs to 237 residues: Carbohydrate deacetylase (237 aa).

His59 and His125 together coordinate Mg(2+).

Belongs to the YdjC deacetylase family. Mg(2+) serves as cofactor.

In terms of biological role, probably catalyzes the deacetylation of acetylated carbohydrates an important step in the degradation of oligosaccharides. The polypeptide is Carbohydrate deacetylase (Halalkalibacterium halodurans (strain ATCC BAA-125 / DSM 18197 / FERM 7344 / JCM 9153 / C-125) (Bacillus halodurans)).